The following is a 284-amino-acid chain: ADP-polyphosphate phosphotransferase 3 (284 aa).

Basic and acidic residues-rich tracts occupy residues 1–22 (MDKHTDDRKKNNHWKAEDRKSA) and 260–277 (DLGKRQKRPADFEGDTRR). Disordered stretches follow at residues 1-32 (MDKHTDDRKKNNHWKAEDRKSAATEASETRSG) and 260-284 (DLGKRQKRPADFEGDTRRRTVPNLF).

It belongs to the polyphosphate kinase 2 (PPK2) family. Class I subfamily.

It carries out the reaction [phosphate](n) + ATP = [phosphate](n+1) + ADP. It catalyses the reaction [phosphate](n) + GTP = [phosphate](n+1) + GDP. In terms of biological role, uses inorganic polyphosphate (polyP) as a donor to convert ADP to ATP. Can also convert GDP to GTP, with lower efficiency. This Rhizobium meliloti (strain 1021) (Ensifer meliloti) protein is ADP-polyphosphate phosphotransferase 3.